A 336-amino-acid polypeptide reads, in one-letter code: Ephrin-B2 (336 aa).

Residues 1–28 form the signal peptide; the sequence is MAMARSRRDSVWKYCWGLLMVLCRTAIS. Residues 29–232 lie on the Extracellular side of the membrane; it reads RSIVLEPIYW…LLGSEVALFA (204 aa). The Ephrin RBD domain maps to 31-167; sequence IVLEPIYWNS…TRAMKILMKV (137 aa). N-linked (GlcNAc...) asparagine glycosylation is present at Asn39. Cystine bridges form between Cys65-Cys104 and Cys92-Cys156. The N-linked (GlcNAc...) asparagine glycan is linked to Asn142. Residues 170–216 are disordered; it reads DASSAGSARNHGPTRRPELEAGTNGRSSTTSPFVKPNPGSSTDGNSA. Polar residues predominate over residues 193–216; that stretch reads NGRSSTTSPFVKPNPGSSTDGNSA. The helical transmembrane segment at 233 to 253 threads the bilayer; sequence GIASGCIIFIVIIITLVVLLL. Residues 254-336 are Cytoplasmic-facing; sequence KYRRRHRKHS…QSPANIYYKV (83 aa). Phosphoserine is present on Ser263. Thr277 is subject to Phosphothreonine. Omega-N-methylarginine is present on Arg280. The PDZ-binding signature appears at 334-336; sequence YKV.

This sequence belongs to the ephrin family. As to quaternary structure, interacts with PDZRN3. Binds to the ephrin receptor EPHA3, EPHA4 and EPHB4. Post-translationally, inducible phosphorylation of tyrosine residues in the cytoplasmic domain. In terms of tissue distribution, expressed in inner and outer pillar cells of the organ of Corti (at protein level). Expressed on lateral floor plate cells, specifically on commissural axon segments that have passed through the floor plate. Expressed in cells of the retinal ganglion cell layer during retinal axon guidance to the optic disk. Expressed in myogenic progenitor cells.

The protein resides in the cell membrane. It is found in the cell junction. It localises to the adherens junction. Cell surface transmembrane ligand for Eph receptors, a family of receptor tyrosine kinases which are crucial for migration, repulsion and adhesion during neuronal, vascular and epithelial development. Binds promiscuously Eph receptors residing on adjacent cells, leading to contact-dependent bidirectional signaling into neighboring cells. The signaling pathway downstream of the receptor is referred to as forward signaling while the signaling pathway downstream of the ephrin ligand is referred to as reverse signaling. Binds to receptor tyrosine kinase including EPHA4, EPHA3 and EPHB4. Together with EPHB4 plays a central role in heart morphogenesis and angiogenesis through regulation of cell adhesion and cell migration. EPHB4-mediated forward signaling controls cellular repulsion and segregation from EFNB2-expressing cells. May play a role in constraining the orientation of longitudinally projecting axons. This chain is Ephrin-B2 (Efnb2), found in Mus musculus (Mouse).